Consider the following 438-residue polypeptide: Xylose isomerase (438 aa).

Residues histidine 100 and aspartate 103 contribute to the active site. Residues glutamate 231, glutamate 267, histidine 270, aspartate 295, aspartate 306, aspartate 308, and aspartate 338 each contribute to the Mg(2+) site.

This sequence belongs to the xylose isomerase family. Homotetramer. The cofactor is Mg(2+).

It is found in the cytoplasm. The catalysed reaction is alpha-D-xylose = alpha-D-xylulofuranose. This chain is Xylose isomerase, found in Pseudomonas savastanoi pv. phaseolicola (strain 1448A / Race 6) (Pseudomonas syringae pv. phaseolicola (strain 1448A / Race 6)).